A 692-amino-acid polypeptide reads, in one-letter code: UvrABC system protein B (692 aa).

A Helicase ATP-binding domain is found at 32–418; sequence DNIENGEKAQ…QTDTIVEQII (387 aa). Residue 45–52 participates in ATP binding; that stretch reads GATGTGKT. The short motif at 98–121 is the Beta-hairpin element; the sequence is YYDYYQPEAYVPSSDTYIEKDSSV. One can recognise a Helicase C-terminal domain in the interval 436–631; it reads QIDDLVGEIH…TIKKEIRDLI (196 aa). The 36-residue stretch at 656 to 691 folds into the UVR domain; it reads KALVKKLEKEMQQAASALDFEGAAQLRDMVLELRAM.

This sequence belongs to the UvrB family. In terms of assembly, forms a heterotetramer with UvrA during the search for lesions. Interacts with UvrC in an incision complex.

It is found in the cytoplasm. In terms of biological role, the UvrABC repair system catalyzes the recognition and processing of DNA lesions. A damage recognition complex composed of 2 UvrA and 2 UvrB subunits scans DNA for abnormalities. Upon binding of the UvrA(2)B(2) complex to a putative damaged site, the DNA wraps around one UvrB monomer. DNA wrap is dependent on ATP binding by UvrB and probably causes local melting of the DNA helix, facilitating insertion of UvrB beta-hairpin between the DNA strands. Then UvrB probes one DNA strand for the presence of a lesion. If a lesion is found the UvrA subunits dissociate and the UvrB-DNA preincision complex is formed. This complex is subsequently bound by UvrC and the second UvrB is released. If no lesion is found, the DNA wraps around the other UvrB subunit that will check the other stand for damage. The protein is UvrABC system protein B of Lactococcus lactis subsp. lactis (strain IL1403) (Streptococcus lactis).